Here is a 144-residue protein sequence, read N- to C-terminus: Large ribosomal subunit protein uL13 (144 aa).

Belongs to the universal ribosomal protein uL13 family. As to quaternary structure, part of the 50S ribosomal subunit.

Its function is as follows. This protein is one of the early assembly proteins of the 50S ribosomal subunit, although it is not seen to bind rRNA by itself. It is important during the early stages of 50S assembly. In Nitratidesulfovibrio vulgaris (strain ATCC 29579 / DSM 644 / CCUG 34227 / NCIMB 8303 / VKM B-1760 / Hildenborough) (Desulfovibrio vulgaris), this protein is Large ribosomal subunit protein uL13.